Here is a 393-residue protein sequence, read N- to C-terminus: S-adenosylmethionine synthase 1 (393 aa).

Glu-9 is a Mg(2+) binding site. An ATP-binding site is contributed by His-15. Glu-43 lines the K(+) pocket. Glu-56 and Gln-99 together coordinate L-methionine. Cys-114 carries the post-translational modification S-nitrosocysteine. Residues 167-169, 235-238, Asp-246, 252-253, Ala-269, Lys-273, and Lys-277 each bind ATP; these read DGK, SGRF, and RK. Residue Asp-246 participates in L-methionine binding. Lys-277 is an L-methionine binding site.

Belongs to the AdoMet synthase family. In terms of assembly, homotetramer. Interacts with GRF3. It depends on Mn(2+) as a cofactor. Requires Mg(2+) as cofactor. Co(2+) serves as cofactor. The cofactor is K(+). In terms of processing, S-nitrosylated in the presence of NO. The inhibition of SAM1 activity by S-nitrosylation could contribute to the cross-talk between ethylene and NO signaling. As to expression, highly expressed in stems and roots.

The protein resides in the cytoplasm. It carries out the reaction L-methionine + ATP + H2O = S-adenosyl-L-methionine + phosphate + diphosphate. The protein operates within amino-acid biosynthesis; S-adenosyl-L-methionine biosynthesis; S-adenosyl-L-methionine from L-methionine: step 1/1. With respect to regulation, reversibly inhibited by NO. Inhibited by 5,5'-dithiobis-2-nitrobenzoic acid (DTNB) and N-ethylmaleimide (NEM) (in vitro). In terms of biological role, catalyzes the formation of S-adenosylmethionine from methionine and ATP. The reaction comprises two steps that are both catalyzed by the same enzyme: formation of S-adenosylmethionine (AdoMet) and triphosphate, and subsequent hydrolysis of the triphosphate. This is S-adenosylmethionine synthase 1 (SAM1) from Arabidopsis thaliana (Mouse-ear cress).